We begin with the raw amino-acid sequence, 236 residues long: Small ribosomal subunit protein uS5 (236 aa).

The S5 DRBM domain occupies 61–124; it reads ENQEVLDIAL…NYAKLNIIEI (64 aa).

This sequence belongs to the universal ribosomal protein uS5 family. In terms of assembly, part of the 30S ribosomal subunit. Contacts protein S4.

In terms of biological role, with S4 and S12 plays an important role in translational accuracy. The protein is Small ribosomal subunit protein uS5 of Pyrococcus furiosus (strain ATCC 43587 / DSM 3638 / JCM 8422 / Vc1).